Consider the following 208-residue polypeptide: Protein JLP2 (208 aa).

Basic residues predominate over residues 185 to 194 (AKKNQKKKNK). The segment at 185 to 208 (AKKNQKKKNKQSKDEVTDDMQLEV) is disordered.

This sequence belongs to the CCDC25 family.

Its subcellular location is the cytoplasm. This Saccharomyces cerevisiae (strain ATCC 204508 / S288c) (Baker's yeast) protein is Protein JLP2 (JLP2).